The sequence spans 951 residues: UvrABC system protein A (951 aa).

33-40 (GLSGSGKS) contacts ATP. The C4-type zinc finger occupies 252-279 (CPICGFTVGELEPRLFSFNAPQGACPDC). ABC transporter domains are found at residues 309 to 587 (WNPI…RKSL) and 607 to 935 (GNGK…QYLK). 639–646 (GVSGSGKS) lines the ATP pocket. The C4-type zinc-finger motif lies at 738–764 (CEACHGDGILKIEMNFLPDVFVPCEVC).

This sequence belongs to the ABC transporter superfamily. UvrA family. Forms a heterotetramer with UvrB during the search for lesions.

Its subcellular location is the cytoplasm. Its function is as follows. The UvrABC repair system catalyzes the recognition and processing of DNA lesions. UvrA is an ATPase and a DNA-binding protein. A damage recognition complex composed of 2 UvrA and 2 UvrB subunits scans DNA for abnormalities. When the presence of a lesion has been verified by UvrB, the UvrA molecules dissociate. This chain is UvrABC system protein A, found in Lactiplantibacillus plantarum (strain ATCC BAA-793 / NCIMB 8826 / WCFS1) (Lactobacillus plantarum).